The sequence spans 392 residues: Transcription factor GATA-4 (392 aa).

A disordered region spans residues 75 to 113 (SSAYNPGTSHPPVSPRFTFSSSPPITAPSSREVSYSSPL). Residues 91-113 (FTFSSSPPITAPSSREVSYSSPL) are compositionally biased toward polar residues. 2 GATA-type zinc fingers span residues 184 to 208 (CVNC…CNAC) and 238 to 262 (CANC…CNAC). Disordered stretches follow at residues 279-339 (KEGI…HSNS) and 359-392 (MPSL…LVLA). Positions 284–293 (TRKRKPKNLS) are enriched in basic residues. Positions 302-316 (SGSDSLTPSTSSTNS) are enriched in low complexity. Residues 364-380 (LSPQNHHSTFNPSPQAN) are compositionally biased toward polar residues.

In terms of tissue distribution, expressed at high levels in heart, small intestine, stomach, ovary, and liver. Found at much lower levels in lung, spleen, pancreas and skin.

Its subcellular location is the nucleus. Functionally, transcriptional activator that binds to the consensus sequence 5'-AGATAG-3'. Associated with cardiac specification and can regulate cardiac-specific transcription during embryogenesis. Activates the expression of cardiac MHC-alpha in vivo. The sequence is that of Transcription factor GATA-4 (gata4) from Xenopus laevis (African clawed frog).